A 512-amino-acid polypeptide reads, in one-letter code: Probable cobyric acid synthase (512 aa).

The region spanning 275–460 is the GATase cobBQ-type domain; sequence SVTVAVPHLP…LHGLFGNDAA (186 aa). Residue Cys353 is the Nucleophile of the active site. The active site involves His452.

It belongs to the CobB/CobQ family. CobQ subfamily.

It functions in the pathway cofactor biosynthesis; adenosylcobalamin biosynthesis. Functionally, catalyzes amidations at positions B, D, E, and G on adenosylcobyrinic A,C-diamide. NH(2) groups are provided by glutamine, and one molecule of ATP is hydrogenolyzed for each amidation. The protein is Probable cobyric acid synthase of Halobacterium salinarum (strain ATCC 29341 / DSM 671 / R1).